A 680-amino-acid chain; its full sequence is Putative E3 ubiquitin-protein ligase UNKL (680 aa).

The tract at residues 1–22 (MPSVSKAAAAALSGSPPQTEKP) is disordered. 4 C3H1-type zinc fingers span residues 75–104 (YSPD…HRTT), 115–145 (YYKT…HGPL), 243–277 (QYRS…HSRT), and 283–310 (PEST…HVEK). 4 stretches are compositionally biased toward low complexity: residues 326–337 (TSPSSTGSGQPG), 375–396 (VSSS…SPTA), 465–497 (SLPR…VGSS), and 545–562 (SPSP…SASP). Disordered regions lie at residues 326–358 (TSPS…QDSK), 375–400 (VSSS…LPAP), 442–520 (DGHD…SAAS), and 545–566 (SPSP…NGAE). The stretch at 563-619 (NGAELARVRRQLDEAKRKIRQWEESWQQVKQVCDAWQREAQEAKERARVADSDRQLA) forms a coiled coil. An RING-type zinc finger spans residues 639–674 (CVACRERAHGAVLRPCQHHILCEPCAATAPECPYCK).

Belongs to the unkempt family. As to quaternary structure, isoform 4 (C-terminal) interacts with the GTP-bound form of RAC1. Isoform 4 (C-terminal) interacts with SMARCD2/BAF60b. Post-translationally, isoform 4 is ubiquitinated in the C-terminal. Ubiquitination is enhanced by activated RAC1. The presence of the RING finger domain is not essential for ubiquitination to occur.

Its subcellular location is the cytoplasm. The protein resides in the nucleus. Its pathway is protein modification; protein ubiquitination. Functionally, may participate in a protein complex showing an E3 ligase activity regulated by RAC1. Ubiquitination is directed towards itself and possibly other substrates, such as SMARCD2/BAF60b. Intrinsic E3 ligase activity has not been proven. The chain is Putative E3 ubiquitin-protein ligase UNKL (UNKL) from Homo sapiens (Human).